Reading from the N-terminus, the 429-residue chain is Histidine--tRNA ligase (429 aa).

The protein belongs to the class-II aminoacyl-tRNA synthetase family. In terms of assembly, homodimer.

Its subcellular location is the cytoplasm. The enzyme catalyses tRNA(His) + L-histidine + ATP = L-histidyl-tRNA(His) + AMP + diphosphate + H(+). The polypeptide is Histidine--tRNA ligase (Streptococcus mutans serotype c (strain ATCC 700610 / UA159)).